The chain runs to 313 residues: Ribosomal RNA small subunit methyltransferase H (313 aa).

S-adenosyl-L-methionine contacts are provided by residues 35–37 (GGH), aspartate 55, phenylalanine 79, aspartate 100, and glutamine 107.

Belongs to the methyltransferase superfamily. RsmH family.

The protein localises to the cytoplasm. It carries out the reaction cytidine(1402) in 16S rRNA + S-adenosyl-L-methionine = N(4)-methylcytidine(1402) in 16S rRNA + S-adenosyl-L-homocysteine + H(+). In terms of biological role, specifically methylates the N4 position of cytidine in position 1402 (C1402) of 16S rRNA. In Burkholderia multivorans (strain ATCC 17616 / 249), this protein is Ribosomal RNA small subunit methyltransferase H.